The sequence spans 447 residues: Mannose/glucose-specific lectin (447 aa).

A run of 3 repeats spans residues S1–V149, P150–R295, and D296–V447. A 3 X approximate tandem repeats region spans residues S1–V447. 3 consecutive Jacalin-type lectin domains span residues M5–P148, T153–P294, and S300–P443.

Belongs to the jacalin lectin family. In terms of assembly, homodimer. In terms of processing, the N-terminus is blocked.

Mannose/glucose specific lectin. Shows agglutinating activity against rabbit erythrocytes. This Parkia platycephala protein is Mannose/glucose-specific lectin.